The chain runs to 395 residues: Elongation factor Tu (395 aa).

The 196-residue stretch at 10–205 (KVHMNVGTIG…TMDEYFKDPV (196 aa)) folds into the tr-type G domain. Residues 19–26 (GHVDHGKT) form a G1 region. 19–26 (GHVDHGKT) serves as a coordination point for GTP. Threonine 26 lines the Mg(2+) pocket. The G2 stretch occupies residues 60–64 (GITIN). Residues 81-84 (DCPG) are G3. GTP contacts are provided by residues 81–85 (DCPGH) and 136–139 (NKVD). Residues 136 to 139 (NKVD) form a G4 region. Positions 173 to 175 (SAF) are G5.

It belongs to the TRAFAC class translation factor GTPase superfamily. Classic translation factor GTPase family. EF-Tu/EF-1A subfamily. Monomer.

It localises to the cytoplasm. The enzyme catalyses GTP + H2O = GDP + phosphate + H(+). GTP hydrolase that promotes the GTP-dependent binding of aminoacyl-tRNA to the A-site of ribosomes during protein biosynthesis. In Treponema denticola (strain ATCC 35405 / DSM 14222 / CIP 103919 / JCM 8153 / KCTC 15104), this protein is Elongation factor Tu.